Here is an 893-residue protein sequence, read N- to C-terminus: Translation initiation factor IF-2 (893 aa).

The tract at residues 1–266 (MVDTKNPGDK…AKPAPSKQRG (266 aa)) is disordered. Residues 59 to 70 (PADAPTAAAAAP) are compositionally biased toward low complexity. The segment covering 71 to 92 (APAPAPVPSAAPRPAAPPPPSR) has biased composition (pro residues). A compositionally biased stretch (low complexity) spans 93–104 (PQQSRSQSPSRS). 2 stretches are compositionally biased toward basic and acidic residues: residues 128 to 148 (ARVR…RRNS) and 155 to 196 (AERE…EAKR). The segment covering 197–226 (PAAAATPAKSATPAARPTGAPAVRAPGVAA) has biased composition (low complexity). A tr-type G domain is found at 389–560 (PRSPVVTVMG…ALQAELLDLK (172 aa)). The tract at residues 398-405 (GHVDHGKT) is G1. 398–405 (GHVDHGKT) is a binding site for GTP. The tract at residues 423-427 (GITQH) is G2. A G3 region spans residues 446–449 (DTPG). Residues 446 to 450 (DTPGH) and 500 to 503 (NKID) contribute to the GTP site. Positions 500-503 (NKID) are G4. The tract at residues 536–538 (SAK) is G5.

The protein belongs to the TRAFAC class translation factor GTPase superfamily. Classic translation factor GTPase family. IF-2 subfamily.

The protein localises to the cytoplasm. Functionally, one of the essential components for the initiation of protein synthesis. Protects formylmethionyl-tRNA from spontaneous hydrolysis and promotes its binding to the 30S ribosomal subunits. Also involved in the hydrolysis of GTP during the formation of the 70S ribosomal complex. The protein is Translation initiation factor IF-2 of Rhodopseudomonas palustris (strain BisA53).